Reading from the N-terminus, the 292-residue chain is tRNA-cytidine(32) 2-sulfurtransferase (292 aa).

The short motif at 54-59 (SGGKDS) is the PP-loop motif element. [4Fe-4S] cluster-binding residues include Cys-129, Cys-132, and Cys-220.

The protein belongs to the TtcA family. As to quaternary structure, homodimer. The cofactor is Mg(2+). Requires [4Fe-4S] cluster as cofactor.

The protein resides in the cytoplasm. It carries out the reaction cytidine(32) in tRNA + S-sulfanyl-L-cysteinyl-[cysteine desulfurase] + AH2 + ATP = 2-thiocytidine(32) in tRNA + L-cysteinyl-[cysteine desulfurase] + A + AMP + diphosphate + H(+). It functions in the pathway tRNA modification. Catalyzes the ATP-dependent 2-thiolation of cytidine in position 32 of tRNA, to form 2-thiocytidine (s(2)C32). The sulfur atoms are provided by the cysteine/cysteine desulfurase (IscS) system. The polypeptide is tRNA-cytidine(32) 2-sulfurtransferase (Cereibacter sphaeroides (strain ATCC 17025 / ATH 2.4.3) (Rhodobacter sphaeroides)).